The following is a 931-amino-acid chain: Isoleucine--tRNA ligase (931 aa).

The 'HIGH' region signature appears at 57-67 (PFANGNIHMGH). Residue Glu-556 participates in L-isoleucyl-5'-AMP binding. The short motif at 597–601 (KMSKS) is the 'KMSKS' region element. Residue Lys-600 coordinates ATP. Residues Cys-890, Cys-893, Cys-910, and Cys-913 each contribute to the Zn(2+) site.

The protein belongs to the class-I aminoacyl-tRNA synthetase family. IleS type 1 subfamily. Monomer. Zn(2+) serves as cofactor.

The protein localises to the cytoplasm. The catalysed reaction is tRNA(Ile) + L-isoleucine + ATP = L-isoleucyl-tRNA(Ile) + AMP + diphosphate. In terms of biological role, catalyzes the attachment of isoleucine to tRNA(Ile). As IleRS can inadvertently accommodate and process structurally similar amino acids such as valine, to avoid such errors it has two additional distinct tRNA(Ile)-dependent editing activities. One activity is designated as 'pretransfer' editing and involves the hydrolysis of activated Val-AMP. The other activity is designated 'posttransfer' editing and involves deacylation of mischarged Val-tRNA(Ile). This chain is Isoleucine--tRNA ligase, found in Lactobacillus delbrueckii subsp. bulgaricus (strain ATCC 11842 / DSM 20081 / BCRC 10696 / JCM 1002 / NBRC 13953 / NCIMB 11778 / NCTC 12712 / WDCM 00102 / Lb 14).